A 1281-amino-acid polypeptide reads, in one-letter code: Protein ETHYLENE-INSENSITIVE 2 (1281 aa).

Topologically, residues 1–21 are cytoplasmic; it reads MDGQQLRSSESPASGGGGVTG. Residues 22–42 form a helical membrane-spanning segment; the sequence is GGAPHLFHALGPALLISIGYI. Topologically, residues 43-61 are extracellular; the sequence is DLGKWVAAVEAGSRFGLDL. A helical transmembrane segment spans residues 62 to 82; it reads VLLALLFNFMAILCQYLAACI. Topologically, residues 83–112 are cytoplasmic; sequence GTVTGRSLAEICHQEYSRPTCIFLGVQAGL. Residues 113-133 traverse the membrane as a helical segment; that stretch reads SLLTSELTMIFGIALGFNLLF. The Extracellular segment spans residues 134–137; the sequence is EYDD. A helical membrane pass occupies residues 138-158; sequence LITGICFATVVPNLLPYAISH. At 159–163 the chain is on the cytoplasmic side; it reads LGKKM. The chain crosses the membrane as a helical span at residues 164–184; the sequence is VGTLNACIAGFALLCYVLGLL. Topologically, residues 185-208 are extracellular; that stretch reads VSQPQIPLTTNVIFPKLSGESAYS. Residues 209-229 form a helical membrane-spanning segment; that stretch reads LMALLGANVMAHNFYIHSSVV. Topologically, residues 230–238 are cytoplasmic; the sequence is QGQKRSAFA. A helical membrane pass occupies residues 239 to 259; that stretch reads VGALFHDHLFSVLFIFTGIFL. At 260-297 the chain is on the extracellular side; it reads VNHVLMNSAAADSTNTLLLTFQDVVELMNQIFVNPMAP. Residues 298 to 318 traverse the membrane as a helical segment; that stretch reads TIFLVVLLFSSHIISLTSAIG. Over 319–325 the chain is Cytoplasmic; the sequence is SQVISQH. The helical transmembrane segment at 326 to 346 threads the bilayer; sequence LFGINLPLSGHHLILKAFAIV. The Extracellular segment spans residues 347–362; that stretch reads PALYCAKVAGAEGIYQ. The helical transmembrane segment at 363-383 threads the bilayer; sequence LLIICQIIQAMLLPSSVVPLF. The Cytoplasmic portion of the chain corresponds to 384–400; the sequence is RVASSRLIMGAHRVSLH. A helical membrane pass occupies residues 401–421; sequence LEILTFLAFLLMLFSNIIFMA. The Extracellular segment spans residues 422–447; it reads EMLFGDSGWLNTLKGNTGSPVVFPST. A helical transmembrane segment spans residues 448–468; the sequence is VLITVACVSVAFSLYMAVTPL. Residues 469-1281 lie on the Cytoplasmic side of the membrane; the sequence is KSGSHEAELQ…KRRLSSKGQQ (813 aa). Disordered stretches follow at residues 540 to 565 and 593 to 665; these read IESD…SPSF and ESTV…NGSG. Polar residues predominate over residues 548 to 557; the sequence is HSTAHTSTAP. Basic and acidic residues predominate over residues 599–610; that stretch reads VDSKSTGERDIE.

The protein belongs to the NRAMP (TC 2.A.55) family. Expressed in roots, leaf sheaths, leaf blades, flowers, developing seeds, germinating seeds and young seedlings. Expressed in adventitious roots, vascular tissues of the seminal roots, lateral roots, the connecting region between vascular tissues and lateral roots, mature leaf, mature stem, tips of adventitious roots derived from the node, shoot apex, young panicle, anthers, pistil, stigma, ovary, seed coat and fruit coat pericarp.

The protein resides in the membrane. In terms of biological role, central factor in ethylene signaling pathways that control development, senescence and grain size. Acts as a positive component of the ethylene-signaling pathway. The sequence is that of Protein ETHYLENE-INSENSITIVE 2 from Oryza sativa subsp. japonica (Rice).